Here is a 227-residue protein sequence, read N- to C-terminus: (S)-2-haloacid dehalogenase (227 aa).

Catalysis depends on D10, which acts as the Nucleophile. An (S)-2-haloacid-binding positions include 11 to 12, R41, and 118 to 119; these read LY and SN. The segment at 175–180 is important for catalytic activity; sequence SSNAWD.

The protein belongs to the HAD-like hydrolase superfamily. S-2-haloalkanoic acid dehalogenase family.

It catalyses the reaction an (S)-2-haloacid + H2O = a (2R)-2-hydroxycarboxylate + a halide anion + H(+). It carries out the reaction (S)-2-chloropropanoate + H2O = (R)-lactate + chloride + H(+). Functionally, catalyzes the hydrolytic dehalogenation of small (S)-2-haloalkanoic acids to yield the corresponding (R)-2-hydroxyalkanoic acids. Acts on acids of short chain lengths, C(2) to C(4), with inversion of configuration at C-2. Active with 2-halogenated carboxylic acids and converts only the S-isomer (or L-isomer) of 2-chloropropionic acid with inversion of configuration to produce R-lactate (or D-isomer). In Pseudomonas fluorescens, this protein is (S)-2-haloacid dehalogenase (dhl VII).